The primary structure comprises 319 residues: Carbonic anhydrase 6 (319 aa).

The first 14 residues, 1–14, serve as a signal peptide directing secretion; the sequence is MITLLFLLVVGAQA. The 258-residue stretch at 16–273 folds into the Alpha-carbonic anhydrase domain; the sequence is HEWTYSEGVL…LNHRVVEANF (258 aa). A disulfide bridge links Cys-37 with Cys-219. A glycan (N-linked (GlcNAc...) asparagine) is linked at Asn-62. The active-site Proton donor/acceptor is His-80. Residues His-106, His-108, and His-133 each contribute to the Zn(2+) site. 215-216 is a substrate binding site; it reads TT. Residue Asn-251 is glycosylated (N-linked (GlcNAc...) asparagine).

It belongs to the alpha-carbonic anhydrase family. Requires Zn(2+) as cofactor. Major constituent of saliva.

The protein resides in the secreted. It carries out the reaction hydrogencarbonate + H(+) = CO2 + H2O. Reversible hydration of carbon dioxide. Its role in saliva is unknown. The protein is Carbonic anhydrase 6 (CA6) of Bos taurus (Bovine).